The chain runs to 1938 residues: Histone-lysine N-methyltransferase SETD1B (1938 aa).

Over residues 1-20 (MSFKEAKPGERGKNPEDHGR) the composition is skewed to basic and acidic residues. Residues 1-44 (MSFKEAKPGERGKNPEDHGRKQAASWMNGMEAANQPSTSAEKKS) form a disordered region. Residues 111–199 (DEFYVGPVPP…NIIHAELDTK (89 aa)) enclose the RRM domain. 11 disordered regions span residues 226–357 (LDAS…ENTF), 369–484 (FPRT…TRIA), 496–630 (LISS…EVTP), 652–688 (GFPPLPPPPPPQSGFPMPPPLPPPPPPTHPSVTVPPP), 916–1125 (KEPP…SSPV), 1147–1174 (HQTAQDTSHLRKKDLDVPLVESKEHKQD), 1187–1206 (MQQNVFKEHEKAPSPMNEEE), 1327–1373 (KTLS…GNSL), 1413–1468 (FPES…VPHM), 1496–1528 (ECEFTKGQLPSTDESAPSPPFPPTDKRKGPKKP), and 1744–1772 (DEPPIDTQGKSIPAQPQASTRAGSERRSE). Polar residues-rich tracts occupy residues 254–290 (VTPNSSTPFSHDTAYSSSRQGTPNSYSQFTPQSQGTP), 298–312 (PFSQDSSYSSRQTTP), 375–407 (LSHSSGNNKSAFSPYQGSTVFPQTDDNQYPQTS), and 446–457 (DSTTEQKASFAQ). The segment covering 512 to 531 (SPISSSSSQLSPIPPYSSSS) has biased composition (low complexity). Polar residues-rich tracts occupy residues 532–546 (HYQDVTPSSRPSSTG) and 569–585 (SLCQNSRSASPIDQINQ). Basic and acidic residues predominate over residues 588–599 (RKMETLDNKELV). Residues 619-628 (EDMEISDDEV) show a composition bias toward acidic residues. Composition is skewed to acidic residues over residues 976-990 (SEGEEEVESEGDDGE) and 1054-1114 (DSSD…EDFF). Over residues 1159-1174 (KDLDVPLVESKEHKQD) the composition is skewed to basic and acidic residues. Basic and acidic residues predominate over residues 1329-1343 (LSEEELPRTPGRDIL). Polar residues-rich tracts occupy residues 1349 to 1358 (LGKSQSTETI) and 1441 to 1453 (EPTSASLTMNSVP). Residues 1454-1464 (SPIPFASPPRG) are compositionally biased toward pro residues. Residues 1751–1765 (QGKSIPAQPQASTRA) are compositionally biased toward polar residues. Residues 1770–1775 (RSEQRR) carry the RxxxRR motif motif. Positions 1799–1916 (KKIRFCKSHI…VNEEITYDYK (118 aa)) constitute an SET domain. Tyrosine 1915 is an S-adenosyl-L-methionine binding site. One can recognise a Post-SET domain in the interval 1922 to 1938 (VKIPCLCGAENCRGTLN).

Belongs to the class V-like SAM-binding methyltransferase superfamily. Component of the SET1B/COMPASS complex.

The protein localises to the nucleus speckle. It localises to the chromosome. The catalysed reaction is L-lysyl(4)-[histone H3] + 3 S-adenosyl-L-methionine = N(6),N(6),N(6)-trimethyl-L-lysyl(4)-[histone H3] + 3 S-adenosyl-L-homocysteine + 3 H(+). In terms of biological role, histone methyltransferase that specifically methylates 'Lys-4' of histone H3, when part of the SET1 histone methyltransferase (HMT) complex, but not if the neighboring 'Lys-9' residue is already methylated. H3 'Lys-4' methylation represents a specific tag for epigenetic transcriptional activation. The polypeptide is Histone-lysine N-methyltransferase SETD1B (setd1b) (Xenopus laevis (African clawed frog)).